Here is a 691-residue protein sequence, read N- to C-terminus: Glycine--tRNA ligase beta subunit (691 aa).

Belongs to the class-II aminoacyl-tRNA synthetase family. As to quaternary structure, tetramer of two alpha and two beta subunits.

The protein localises to the cytoplasm. It carries out the reaction tRNA(Gly) + glycine + ATP = glycyl-tRNA(Gly) + AMP + diphosphate. The polypeptide is Glycine--tRNA ligase beta subunit (Buchnera aphidicola subsp. Schizaphis graminum (strain Sg)).